Here is a 273-residue protein sequence, read N- to C-terminus: Bis(5'-nucleosyl)-tetraphosphatase, symmetrical (273 aa).

It belongs to the Ap4A hydrolase family.

It carries out the reaction P(1),P(4)-bis(5'-adenosyl) tetraphosphate + H2O = 2 ADP + 2 H(+). In terms of biological role, hydrolyzes diadenosine 5',5'''-P1,P4-tetraphosphate to yield ADP. The sequence is that of Bis(5'-nucleosyl)-tetraphosphatase, symmetrical (apaH) from Buchnera aphidicola subsp. Schizaphis graminum (strain Sg).